A 361-amino-acid polypeptide reads, in one-letter code: Polyribonucleotide 5'-hydroxyl-kinase MJ1315 (361 aa).

39 to 46 (GGVDSGKT) is an ATP binding site.

The cofactor is a divalent metal cation.

It catalyses the reaction a 5'-end dephospho-2'-deoxyribonucleoside-DNA + ATP = a 5'-end 5'-phospho-2'-deoxyribonucleoside-DNA + ADP + H(+). It carries out the reaction a 5'-end dephospho-ribonucleoside-RNA + ATP = a 5'-end 5'-phospho-ribonucleoside-RNA + ADP + H(+). Its function is as follows. Polynucleotide kinase that can phosphorylate the 5'-hydroxyl groups of both single-stranded RNA (ssRNA) and single-stranded DNA (ssDNA). Exhibits a strong preference for ssRNA. This Methanocaldococcus jannaschii (strain ATCC 43067 / DSM 2661 / JAL-1 / JCM 10045 / NBRC 100440) (Methanococcus jannaschii) protein is Polyribonucleotide 5'-hydroxyl-kinase MJ1315.